A 300-amino-acid polypeptide reads, in one-letter code: MAEPTVCSFLTKVLCAHGGRMFLKDLRGHVELSEARLRDVLQRAGPERFLLQEVETQEGLGDAEAEAAAGAVGGGGTSAWRVVAVSSVRLCARYQRGECQACDQLHFCRRHMLGKCPNRDCWSTCTLSHDIHTPVNMQVLKSHGLFGLNENQLRILLLQNDPCLLPEVCLLYNKGEALYGYCNLKDKCNKFHVCKSFVKGECKLQTCKRSHQLIHAASLKLLQDQGLNIPSVVNFQIISTYKHMKLHKMLENTDNSSPSTEHSQGLEKQGVHAAGAAEAGPLASVPAQSAKKPCPVSCEK.

At alanine 2 the chain carries N-acetylalanine. A compositionally biased stretch (polar residues) spans 252–263 (NTDNSSPSTEHS). Positions 252-300 (NTDNSSPSTEHSQGLEKQGVHAAGAAEAGPLASVPAQSAKKPCPVSCEK) are disordered. Low complexity predominate over residues 271 to 283 (VHAAGAAEAGPLA).

The polypeptide is Zinc finger CCCH-type antiviral protein 1-like (ZC3HAV1L) (Homo sapiens (Human)).